The following is a 525-amino-acid chain: Peptide chain release factor 3 (525 aa).

In terms of domain architecture, tr-type G spans 11–279; the sequence is DKRRTFAIIS…TYLEYAPQPA (269 aa). GTP-binding positions include 20-27, 88-92, and 142-145; these read SHPDAGKT, DTPGH, and NKLD.

The protein belongs to the TRAFAC class translation factor GTPase superfamily. Classic translation factor GTPase family. PrfC subfamily.

The protein resides in the cytoplasm. Functionally, increases the formation of ribosomal termination complexes and stimulates activities of RF-1 and RF-2. It binds guanine nucleotides and has strong preference for UGA stop codons. It may interact directly with the ribosome. The stimulation of RF-1 and RF-2 is significantly reduced by GTP and GDP, but not by GMP. This is Peptide chain release factor 3 from Levilactobacillus brevis (strain ATCC 367 / BCRC 12310 / CIP 105137 / JCM 1170 / LMG 11437 / NCIMB 947 / NCTC 947) (Lactobacillus brevis).